Reading from the N-terminus, the 348-residue chain is Short-chain dehydrogenase fogG (348 aa).

Residues leucine 51, arginine 75, aspartate 100, and asparagine 126 each coordinate NADP(+). Catalysis depends on proton donor residues serine 180 and tyrosine 215. Positions 215 and 219 each coordinate NADP(+). The Lowers pKa of active site Tyr role is filled by lysine 219.

This sequence belongs to the short-chain dehydrogenases/reductases (SDR) family.

The protein operates within secondary metabolite biosynthesis. Functionally, short-chain dehydrogenase; part of the gene cluster that mediates the biosynthesis of flavoglaucin and congeners (including aspergin, dihydroauroglaucin and auroglaucin), prenylated salicylaldehyde derivatives carrying a saturated or an unsaturated C-7 side chain. The PKS fogA releases the carboxylic acid (8E,10E,12E)-3,5,7-trihydroxytetradeca-8,10,12-trienoic acid as its product, as well as derivatives with one and two double bonds. FogA is indeed able to reduce the initial triketide, thus being at least partially responsible for the differently saturated heptyl side chains of flavoglaucin congeners. The oxidoreductases fogB, fogC and fogD modify the nascent polyketide in fogA-bound form and, together, fogA, fogB, fogC and fogD are necessary for the formation of the aromatic core and the cyclized PKS products are released as salicyl alcohols. In particular, fogB is responsible for oxidation of a hydroxyl group or reduction of remaining double bond(s) at the C-7 residue whereas fogD is probably involved in the reductive release of the modified PKS products. The cytochrome P450 monooxygenase fogE is then responsible for the hydroxylation at C-3 of the benzene ring. The fogE products are substrates of the prenyltransferase fogH and the prenylated benzyl alcohols are subsequently oxidized by the fogF to produce the final aryl aldehydes flavoglaucin and congeners. The short-chain dehydrogenase fogG does not seem to be involved in the biosynthesis of the prenylated salicylaldehyde derivatives. This chain is Short-chain dehydrogenase fogG, found in Aspergillus ruber (strain CBS 135680).